A 595-amino-acid polypeptide reads, in one-letter code: Chaperone protein HscA homolog (595 aa).

Belongs to the heat shock protein 70 family.

Functionally, chaperone involved in the maturation of iron-sulfur cluster-containing proteins. Has a low intrinsic ATPase activity which is markedly stimulated by HscB. The polypeptide is Chaperone protein HscA homolog (Rickettsia peacockii (strain Rustic)).